Here is a 513-residue protein sequence, read N- to C-terminus: ATP synthase subunit alpha 1 (513 aa).

169-176 contributes to the ATP binding site; it reads GDRQTGKT.

It belongs to the ATPase alpha/beta chains family. F-type ATPases have 2 components, CF(1) - the catalytic core - and CF(0) - the membrane proton channel. CF(1) has five subunits: alpha(3), beta(3), gamma(1), delta(1), epsilon(1). CF(0) has three main subunits: a(1), b(2) and c(9-12). The alpha and beta chains form an alternating ring which encloses part of the gamma chain. CF(1) is attached to CF(0) by a central stalk formed by the gamma and epsilon chains, while a peripheral stalk is formed by the delta and b chains.

It is found in the cell inner membrane. The enzyme catalyses ATP + H2O + 4 H(+)(in) = ADP + phosphate + 5 H(+)(out). In terms of biological role, produces ATP from ADP in the presence of a proton gradient across the membrane. The alpha chain is a regulatory subunit. In Nitrosomonas eutropha (strain DSM 101675 / C91 / Nm57), this protein is ATP synthase subunit alpha 1.